We begin with the raw amino-acid sequence, 139 residues long: Nucleoside diphosphate kinase (139 aa).

ATP contacts are provided by K11, F59, R87, T93, R104, and N114. Residue H117 is the Pros-phosphohistidine intermediate of the active site.

The protein belongs to the NDK family. Homotetramer. Mg(2+) serves as cofactor.

It localises to the cytoplasm. The catalysed reaction is a 2'-deoxyribonucleoside 5'-diphosphate + ATP = a 2'-deoxyribonucleoside 5'-triphosphate + ADP. It carries out the reaction a ribonucleoside 5'-diphosphate + ATP = a ribonucleoside 5'-triphosphate + ADP. Functionally, major role in the synthesis of nucleoside triphosphates other than ATP. The ATP gamma phosphate is transferred to the NDP beta phosphate via a ping-pong mechanism, using a phosphorylated active-site intermediate. The protein is Nucleoside diphosphate kinase of Pasteurella multocida (strain Pm70).